We begin with the raw amino-acid sequence, 165 residues long: SsrA-binding protein (165 aa).

This sequence belongs to the SmpB family.

The protein localises to the cytoplasm. Functionally, required for rescue of stalled ribosomes mediated by trans-translation. Binds to transfer-messenger RNA (tmRNA), required for stable association of tmRNA with ribosomes. tmRNA and SmpB together mimic tRNA shape, replacing the anticodon stem-loop with SmpB. tmRNA is encoded by the ssrA gene; the 2 termini fold to resemble tRNA(Ala) and it encodes a 'tag peptide', a short internal open reading frame. During trans-translation Ala-aminoacylated tmRNA acts like a tRNA, entering the A-site of stalled ribosomes, displacing the stalled mRNA. The ribosome then switches to translate the ORF on the tmRNA; the nascent peptide is terminated with the 'tag peptide' encoded by the tmRNA and targeted for degradation. The ribosome is freed to recommence translation, which seems to be the essential function of trans-translation. This chain is SsrA-binding protein, found in Prochlorococcus marinus (strain MIT 9515).